A 434-amino-acid chain; its full sequence is Enolase (434 aa).

Q165 is a (2R)-2-phosphoglycerate binding site. E207 functions as the Proton donor in the catalytic mechanism. The Mg(2+) site is built by D244, E291, and D318. Residues K343, R372, S373, and K394 each coordinate (2R)-2-phosphoglycerate. K343 (proton acceptor) is an active-site residue.

Belongs to the enolase family. Mg(2+) is required as a cofactor.

It localises to the cytoplasm. It is found in the secreted. The protein resides in the cell surface. It catalyses the reaction (2R)-2-phosphoglycerate = phosphoenolpyruvate + H2O. It functions in the pathway carbohydrate degradation; glycolysis; pyruvate from D-glyceraldehyde 3-phosphate: step 4/5. Its function is as follows. Catalyzes the reversible conversion of 2-phosphoglycerate (2-PG) into phosphoenolpyruvate (PEP). It is essential for the degradation of carbohydrates via glycolysis. In Macrococcus caseolyticus (strain JCSC5402) (Macrococcoides caseolyticum), this protein is Enolase.